The chain runs to 240 residues: ATP synthase subunit a (240 aa).

A run of 5 helical transmembrane segments spans residues 21–41, 83–103, 116–136, 184–204, and 207–227; these read LSSM…AMLF, AVTL…FAII, DPTV…FYGV, LLGL…GAAI, and LIWQ…FVML.

This sequence belongs to the ATPase A chain family. F-type ATPases have 2 components, CF(1) - the catalytic core - and CF(0) - the membrane proton channel. CF(1) has five subunits: alpha(3), beta(3), gamma(1), delta(1), epsilon(1). CF(0) has three main subunits: a(1), b(2) and c(9-12). The alpha and beta chains form an alternating ring which encloses part of the gamma chain. CF(1) is attached to CF(0) by a central stalk formed by the gamma and epsilon chains, while a peripheral stalk is formed by the delta and b chains.

The protein resides in the cell membrane. Key component of the proton channel; it plays a direct role in the translocation of protons across the membrane. This chain is ATP synthase subunit a, found in Macrococcus caseolyticus (strain JCSC5402) (Macrococcoides caseolyticum).